A 239-amino-acid chain; its full sequence is tRNA (guanine-N(7)-)-methyltransferase (239 aa).

4 residues coordinate S-adenosyl-L-methionine: Glu-69, Glu-94, Asp-121, and Asp-144. Residue Asp-144 is part of the active site. Residue Lys-148 coordinates substrate. The segment at 150-155 (RHNKRR) is interaction with RNA. Substrate is bound by residues Asp-180 and 217-220 (TKFE).

The protein belongs to the class I-like SAM-binding methyltransferase superfamily. TrmB family. In terms of assembly, monomer.

The enzyme catalyses guanosine(46) in tRNA + S-adenosyl-L-methionine = N(7)-methylguanosine(46) in tRNA + S-adenosyl-L-homocysteine. Its pathway is tRNA modification; N(7)-methylguanine-tRNA biosynthesis. Its function is as follows. Catalyzes the formation of N(7)-methylguanine at position 46 (m7G46) in tRNA. In Salmonella choleraesuis (strain SC-B67), this protein is tRNA (guanine-N(7)-)-methyltransferase.